Here is a 344-residue protein sequence, read N- to C-terminus: Probable Delta(7)-sterol 5(6)-desaturase (344 aa).

A run of 3 helical transmembrane segments spans residues 76-96 (LSLF…FASL), 123-143 (QTNA…VAEV), and 160-180 (WYDF…IYWI). The region spanning 167–292 (PLFIMFTDFG…FTTLWDRLGG (126 aa)) is the Fatty acid hydroxylase domain. Residues 181 to 185 (HRGLH) carry the Histidine box-1 motif. The Histidine box-2 motif lies at 194–198 (HKPHH). A helical membrane pass occupies residues 224–244 (HIFPFIFPLQKMAYVGLFVFI). A Histidine box-3 motif is present at residues 269–273 (HSVHH).

It belongs to the sterol desaturase family. The cofactor is Fe cation.

It is found in the endoplasmic reticulum membrane. The enzyme catalyses a Delta(7)-sterol + 2 Fe(II)-[cytochrome b5] + O2 + 2 H(+) = a Delta(5),Delta(7)-sterol + 2 Fe(III)-[cytochrome b5] + 2 H2O. It functions in the pathway steroid metabolism; ergosterol biosynthesis; ergosterol from zymosterol: step 3/5. Catalyzes the introduction of a C-5 double bond in the B ring of ergosterol. May contribute to the regulation of ergosterol biosynthesis. In Neurospora crassa (strain ATCC 24698 / 74-OR23-1A / CBS 708.71 / DSM 1257 / FGSC 987), this protein is Probable Delta(7)-sterol 5(6)-desaturase.